The following is a 93-amino-acid chain: U12-lycotoxin-Ls1b (93 aa).

Positions 1 to 18 (MKFAVILLFSLVVLAVAS) are cleaved as a signal peptide. The propeptide occupies 19 to 38 (ESVEEVRREIDIEDLPEQQR).

It belongs to the neurotoxin 31 family. Contains 5 disulfide bonds. In terms of tissue distribution, expressed by the venom gland.

It is found in the secreted. The chain is U12-lycotoxin-Ls1b from Lycosa singoriensis (Wolf spider).